The following is a 179-amino-acid chain: MIILGVDPGSRATGYGLVDPSGGDEHLVAADTIRLADTDDHPTRLKQIYDALVDVIDAHGPDEFAVEMPVYGQNPQSMLKLGRAQAAAMMAALNRDLPVAQYTPKEVKKSVTGNGNASKKQVGFMIESILSAREQTFAHDTADALAIALCHGNRDAHDDGDSYTGWASFVDANPDRVSE.

Residues Asp-7, Glu-67, and Asp-140 contribute to the active site. 3 residues coordinate Mg(2+): Asp-7, Glu-67, and Asp-140.

It belongs to the RuvC family. As to quaternary structure, homodimer which binds Holliday junction (HJ) DNA. The HJ becomes 2-fold symmetrical on binding to RuvC with unstacked arms; it has a different conformation from HJ DNA in complex with RuvA. In the full resolvosome a probable DNA-RuvA(4)-RuvB(12)-RuvC(2) complex forms which resolves the HJ. It depends on Mg(2+) as a cofactor.

It is found in the cytoplasm. It carries out the reaction Endonucleolytic cleavage at a junction such as a reciprocal single-stranded crossover between two homologous DNA duplexes (Holliday junction).. Its function is as follows. The RuvA-RuvB-RuvC complex processes Holliday junction (HJ) DNA during genetic recombination and DNA repair. Endonuclease that resolves HJ intermediates. Cleaves cruciform DNA by making single-stranded nicks across the HJ at symmetrical positions within the homologous arms, yielding a 5'-phosphate and a 3'-hydroxyl group; requires a central core of homology in the junction. The consensus cleavage sequence is 5'-(A/T)TT(C/G)-3'. Cleavage occurs on the 3'-side of the TT dinucleotide at the point of strand exchange. HJ branch migration catalyzed by RuvA-RuvB allows RuvC to scan DNA until it finds its consensus sequence, where it cleaves and resolves the cruciform DNA. The sequence is that of Crossover junction endodeoxyribonuclease RuvC from Salinibacter ruber (strain DSM 13855 / M31).